We begin with the raw amino-acid sequence, 575 residues long: Chaperonin CPN60-2, mitochondrial (575 aa).

The transit peptide at 1–32 directs the protein to the mitochondrion; sequence MHRFASGLASKARLARKGANQIASRSSWSRNY.

Belongs to the chaperonin (HSP60) family.

The protein localises to the mitochondrion. Implicated in mitochondrial protein import and macromolecular assembly. May facilitate the correct folding of imported proteins. May also prevent misfolding and promote the refolding and proper assembly of unfolded polypeptides generated under stress conditions in the mitochondrial matrix. The protein is Chaperonin CPN60-2, mitochondrial (CPN60-2) of Cucurbita maxima (Pumpkin).